The following is a 352-amino-acid chain: MNDIQVAKESLDKIIKKARVHLYKPIQIAEILYQDRVNKNINLLDKETYRNISKKWRDVICIRFLGRVSTSSAKYQDDLFNDNAMPPKHLNILGEMNRKTNGGVESYIYKKFFERFNQMSSALEYSYSRTPDNFHLSEFLALFWLEPGLKRSIDKVYEIVVYALFSSLIEALGVKVKIDLDLSNIDLLKEFEDFTRQIISLDSENTSLELNAKINRVGVTNASDRGLDMWANFGMAIQIKHLSLTEELAENIVSSVSSDRIVIVCKESEEKLILSLLNQIGWRSKIQSIITEADLIKWYDKALRGKSAYLVGSKILEHIRNEINLEFPATDIVDFNHFFHEREYNKALDIEK.

It carries out the reaction Endonucleolytic cleavage of DNA to give specific double-stranded fragments with terminal 5'-phosphates.. Functionally, a P subtype restriction enzyme that recognizes the double-stranded sequence 5'-RGCGCY-3' and cleaves after C-5. The protein is Type II restriction enzyme HaeII (haeIIR) of Haemophilus aegyptius.